The following is a 353-amino-acid chain: Phospho-furanose lactonase (353 aa).

The Zn(2+) site is built by His24, His26, Lys153, His186, and His214. An N6-carboxylysine modification is found at Lys153. Residue 244 to 245 (KY) participates in substrate binding. Residue Asp272 participates in Zn(2+) binding. 275–278 (RILY) serves as a coordination point for substrate.

Belongs to the metallo-dependent hydrolases superfamily. Phosphotriesterase family. Zn(2+) is required as a cofactor.

The catalysed reaction is a 1,4-lactone + H2O = a 4-hydroxyacid + H(+). It catalyses the reaction D-xylono-1,4-lactone 5-phosphate + H2O = 5-phospho-D-xylonate + H(+). It carries out the reaction L-arabino-1,4-lactone 5-phosphate + H2O = 5-phospho-L-arabinonate + H(+). In terms of biological role, catalyzes the hydrolysis of D-xylono-1,4-lactone-5-phosphate and L-arabino-1,4-lactone-5-phosphate. Also able to hydrolyze carboxy 1,4-lactones. This Mycoplasmopsis synoviae (strain 53) (Mycoplasma synoviae) protein is Phospho-furanose lactonase.